The primary structure comprises 830 residues: Periplasmic nitrate reductase 2 (830 aa).

A signal peptide (tat-type signal) is located at residues 1–31; it reads MKVSRRKFIKAQAVASAAAAAGISIPISASN. Residues 41 to 97 enclose the 4Fe-4S Mo/W bis-MGD-type domain; the sequence is ITWEKAPCRFCGTGCSVNVGTKEGKVVATHGDIKSPVNRGLNCVKGYFLSKIMYGKD. The [4Fe-4S] cluster site is built by cysteine 48, cysteine 51, cysteine 55, and cysteine 83. Residues lysine 85, glutamine 152, asparagine 177, cysteine 181, 245–249, 264–266, methionine 374, glutamine 378, asparagine 484, 510–511, lysine 533, aspartate 560, and 720–729 contribute to the Mo-bis(molybdopterin guanine dinucleotide) site; these read STFEH, QSD, SE, and TGRVIEHWHS. Tryptophan 796 provides a ligand contact to substrate. Positions 804 and 821 each coordinate Mo-bis(molybdopterin guanine dinucleotide).

This sequence belongs to the prokaryotic molybdopterin-containing oxidoreductase family. NasA/NapA/NarB subfamily. Component of the periplasmic nitrate reductase NapAB complex composed of NapA and NapB. The cofactor is [4Fe-4S] cluster. Mo-bis(molybdopterin guanine dinucleotide) is required as a cofactor. Predicted to be exported by the Tat system. The position of the signal peptide cleavage has not been experimentally proven.

It localises to the periplasm. The catalysed reaction is 2 Fe(II)-[cytochrome] + nitrate + 2 H(+) = 2 Fe(III)-[cytochrome] + nitrite + H2O. Catalytic subunit of the periplasmic nitrate reductase complex NapAB. Receives electrons from NapB and catalyzes the reduction of nitrate to nitrite. This chain is Periplasmic nitrate reductase 2, found in Photobacterium profundum (strain SS9).